Consider the following 102-residue polypeptide: RNA-binding protein Hfq (102 aa).

Positions 9 to 68 (DPFLNALRRERVPVSIYLVNGIKLQGQIESFDQFVILLKNTVSQMVYKHAISTVVPSRPV) constitute a Sm domain. The interval 63-102 (VPSRPVSHHSNNAGGGTSNNYHHGSNAQGSGAQQDSEETE) is disordered. The span at 70 to 96 (HHSNNAGGGTSNNYHHGSNAQGSGAQQ) shows a compositional bias: polar residues.

Belongs to the Hfq family. As to quaternary structure, homohexamer.

In terms of biological role, RNA chaperone that binds small regulatory RNA (sRNAs) and mRNAs to facilitate mRNA translational regulation in response to envelope stress, environmental stress and changes in metabolite concentrations. Also binds with high specificity to tRNAs. This chain is RNA-binding protein Hfq, found in Salmonella arizonae (strain ATCC BAA-731 / CDC346-86 / RSK2980).